Consider the following 403-residue polypeptide: Serine/threonine transporter SstT (403 aa).

9 consecutive transmembrane segments (helical) span residues valine 14–isoleucine 34, valine 44–serine 64, isoleucine 79–methionine 99, alanine 138–leucine 158, glycine 175–valine 195, leucine 214–phenylalanine 234, methionine 295–isoleucine 315, valine 327–isoleucine 347, and leucine 353–valine 373.

It belongs to the dicarboxylate/amino acid:cation symporter (DAACS) (TC 2.A.23) family.

The protein resides in the cell inner membrane. It catalyses the reaction L-serine(in) + Na(+)(in) = L-serine(out) + Na(+)(out). The enzyme catalyses L-threonine(in) + Na(+)(in) = L-threonine(out) + Na(+)(out). In terms of biological role, involved in the import of serine and threonine into the cell, with the concomitant import of sodium (symport system). The protein is Serine/threonine transporter SstT of Pseudomonas putida (strain ATCC 700007 / DSM 6899 / JCM 31910 / BCRC 17059 / LMG 24140 / F1).